Reading from the N-terminus, the 224-residue chain is UPF0758 protein VIBHAR_00653 (224 aa).

The MPN domain maps to 102–224; that stretch reads ALTSPEQTKL…SVSFAERGWI (123 aa). Zn(2+)-binding residues include His173, His175, and Asp186. The JAMM motif motif lies at 173 to 186; the sequence is HNHPSGVAEPSQAD.

This sequence belongs to the UPF0758 family.

This Vibrio campbellii (strain ATCC BAA-1116) protein is UPF0758 protein VIBHAR_00653.